Reading from the N-terminus, the 301-residue chain is GTPase Era (301 aa).

In terms of domain architecture, Era-type G spans 6–173 (KSGFVAIVGR…LEQTNANLEI (168 aa)). The interval 14–21 (GRPNVGKS) is G1. 14-21 (GRPNVGKS) contacts GTP. Residues 40 to 44 (QTTRN) form a G2 region. A G3 region spans residues 61–64 (DTPG). Residues 61-65 (DTPGI) and 123-126 (NKID) contribute to the GTP site. Positions 123-126 (NKID) are G4. A G5 region spans residues 152–154 (ISA). Residues 204-282 (TREEVPHSVA…FLEIWVKVQK (79 aa)) form the KH type-2 domain.

This sequence belongs to the TRAFAC class TrmE-Era-EngA-EngB-Septin-like GTPase superfamily. Era GTPase family. Monomer.

It localises to the cytoplasm. The protein localises to the cell membrane. Functionally, an essential GTPase that binds both GDP and GTP, with rapid nucleotide exchange. Plays a role in 16S rRNA processing and 30S ribosomal subunit biogenesis and possibly also in cell cycle regulation and energy metabolism. This is GTPase Era from Listeria monocytogenes serotype 4b (strain F2365).